The sequence spans 244 residues: 3-oxoacyl-[acyl-carrier-protein] reductase FabG (244 aa).

Residues 12–15 and threonine 37 contribute to the NADP(+) site; that span reads GASR. Residues glycine 50 and glycine 53 each contribute to the Ca(2+) site. Residues 59 to 60 and asparagine 86 each bind NADP(+); that span reads NV. Serine 138 provides a ligand contact to substrate. Asparagine 145 provides a ligand contact to Ca(2+). The Proton acceptor role is filled by tyrosine 151. NADP(+)-binding positions include 151–155 and isoleucine 184; that span reads YAAAK. Residues glutamate 233 and threonine 234 each contribute to the Ca(2+) site.

It belongs to the short-chain dehydrogenases/reductases (SDR) family. Homotetramer.

It catalyses the reaction a (3R)-hydroxyacyl-[ACP] + NADP(+) = a 3-oxoacyl-[ACP] + NADPH + H(+). It carries out the reaction 3-oxobutanoyl-[ACP] + NADPH + H(+) = (3R)-hydroxybutanoyl-[ACP] + NADP(+). The catalysed reaction is 3-oxopentanoyl-[ACP] + NADPH + H(+) = (3R)-hydroxypentanoyl-[ACP] + NADP(+). The enzyme catalyses 3-oxohexanoyl-[ACP] + NADPH + H(+) = (3R)-hydroxyhexanoyl-[ACP] + NADP(+). It catalyses the reaction 3-oxoheptanoyl-[ACP] + NADPH + H(+) = (3R)-hydroxyheptanoyl-[ACP] + NADP(+). It carries out the reaction 3-oxooctanoyl-[ACP] + NADPH + H(+) = (3R)-hydroxyoctanoyl-[ACP] + NADP(+). The catalysed reaction is 3-oxononanoyl-[ACP] + NADPH + H(+) = (3R)-hydroxynonanoyl-[ACP] + NADP(+). The enzyme catalyses 3-oxodecanoyl-[ACP] + NADPH + H(+) = (3R)-hydroxydecanoyl-[ACP] + NADP(+). It catalyses the reaction 3-oxohexadecanoyl-[ACP] + NADPH + H(+) = (3R)-hydroxyhexadecanoyl-[ACP] + NADP(+). It carries out the reaction 3-oxo-(9Z)-hexadecenoyl-[ACP] + NADPH + H(+) = (3R)-hydroxy-(9Z)-hexadecenoyl-[ACP] + NADP(+). The catalysed reaction is 4-methyl-3-oxopentanoyl-[ACP] + NADPH + H(+) = (3R)-hydroxy-4-methylpentanoyl-[ACP] + NADP(+). The enzyme catalyses 5-methyl-3-oxohexanoyl-[ACP] + NADPH + H(+) = (3R)-hydroxy-5-methylhexanoyl-[ACP] + NADP(+). It catalyses the reaction 4-methyl-3-oxohexanoyl-[ACP] + NADPH + H(+) = (3R)-hydroxy-4-methylhexanoyl-[ACP] + NADP(+). It functions in the pathway lipid metabolism; fatty acid biosynthesis. Inhibited by cinnamic acid derivatives. Catalyzes the NADPH-dependent reduction of beta-ketoacyl-ACP substrates to beta-hydroxyacyl-ACP products, the first reductive step in the elongation cycle of fatty acid biosynthesis. In Escherichia coli (strain K12), this protein is 3-oxoacyl-[acyl-carrier-protein] reductase FabG (fabG).